The following is a 382-amino-acid chain: Ribosomal RNA large subunit methyltransferase G (382 aa).

It belongs to the methyltransferase superfamily. RlmG family.

It is found in the cytoplasm. The catalysed reaction is guanosine(1835) in 23S rRNA + S-adenosyl-L-methionine = N(2)-methylguanosine(1835) in 23S rRNA + S-adenosyl-L-homocysteine + H(+). Its function is as follows. Specifically methylates the guanine in position 1835 (m2G1835) of 23S rRNA. This is Ribosomal RNA large subunit methyltransferase G from Aliivibrio fischeri (strain MJ11) (Vibrio fischeri).